A 459-amino-acid polypeptide reads, in one-letter code: Cytosolic carboxypeptidase 6 (459 aa).

In terms of domain architecture, Peptidase M14 spans 142-418 (IPYTYGQMQI…AFCRALLNFY (277 aa)). Positions 204, 207, and 302 each coordinate Zn(2+). The Proton donor/acceptor role is filled by Glu-376.

Belongs to the peptidase M14 family. It depends on Zn(2+) as a cofactor. Expressed in labial and amphid neurons.

The protein localises to the cytoplasm. The enzyme catalyses (L-glutamyl)(n+1)-gamma-L-glutamyl-L-glutamyl-[protein] + H2O = (L-glutamyl)(n)-gamma-L-glutamyl-L-glutamyl-[protein] + L-glutamate. In terms of biological role, metallocarboxypeptidase that catalyzes the removing of polyglutamate side chains that are present on the gamma-carboxyl group of glutamate residues of tubulin in sensory cilia. Probably via the deglutamylation of tubulin, promotes microtubule stability required for axon regrowth after injury. Also regulates microtubule dynamics in uterine muscle cells. The protein is Cytosolic carboxypeptidase 6 of Caenorhabditis elegans.